The primary structure comprises 797 residues: Discoidin domain-containing receptor tyrosine kinase B (797 aa).

A signal peptide spans 1–19 (MKLLLYLFGVTFHSNTVVA). The Extracellular portion of the chain corresponds to 20-384 (LELRECSHQL…VTEHDDGTSM (365 aa)). One can recognise an F5/8 type C domain in the interval 25–181 (CSHQLGMSNR…VCMRVEVFGC (157 aa)). Cys-25 and Cys-181 are disulfide-bonded. The disordered stretch occupies residues 46-66 (SFDLQSTGPQHARAHQESGSG). Asn-141, Asn-167, Asn-264, and Asn-353 each carry an N-linked (GlcNAc...) asparagine glycan. The chain crosses the membrane as a helical span at residues 385–405 (FAFIIFFFMFLIVAVIILTVL). Topologically, residues 406 to 797 (YRKREYRVKA…LVHTSPHIHF (392 aa)) are cytoplasmic. Positions 527–785 (LICVSRIGQG…PSFENVHLHL (259 aa)) constitute a Protein kinase domain. Residues 533–541 (IGQGEFGEV) and Lys-554 contribute to the ATP site. Asp-645 (proton acceptor) is an active-site residue.

Belongs to the protein kinase superfamily. Tyr protein kinase family. Insulin receptor subfamily. Interacts with shc-1. Autophosphorylated on tyrosine residues. Post-translationally, N-glycosylation at Asn-141 is required for axon regeneration after injury but is dispensable for kinase activity and axon localization. In terms of tissue distribution, expressed in some neurons in head and tail, some motoneurons in ventral nerve cord, in PVP interneurons, seam cells, rectal gland cells, vulva cells and some non-neuronal cells in the tail. Expressed in D-type motor neurons.

The protein localises to the cell membrane. Its subcellular location is the cell projection. It is found in the axon. The protein resides in the perikaryon. It carries out the reaction L-tyrosyl-[protein] + ATP = O-phospho-L-tyrosyl-[protein] + ADP + H(+). Functionally, tyrosine-protein kinase receptor which, together with ddr-1, is involved in axon guidance to establish the tracts for the ventral and dorsal nerve cords during nervous system development. Acts upstream of the adapter shc-1, and the tyrosine kinase receptors svh-1 and svh-2 to regulate axon regeneration following injury in D-type motor neurons. May mediate axon regeneration in association with the collagen emb-9. The chain is Discoidin domain-containing receptor tyrosine kinase B from Caenorhabditis elegans.